The following is a 1454-amino-acid chain: Alpha-2-macroglobulin-like protein 1 (1454 aa).

Positions 1 to 17 (MWAQLLLGMLALSPAIA) are cleaved as a signal peptide. Cys40 and Cys78 are disulfide-bonded. Residue Asn120 is glycosylated (N-linked (GlcNAc...) asparagine). 2 disulfide bridges follow: Cys241-Cys291 and Cys259-Cys279. 2 N-linked (GlcNAc...) asparagine glycosylation sites follow: Asn281 and Asn409. 7 cysteine pairs are disulfide-bonded: Cys464-Cys557, Cys589-Cys769, Cys819-Cys847, Cys845-Cys881, Cys919-Cys1307, Cys1075-Cys1123, and Cys1338-Cys1453. The interval 695–726 (SHRSPEYSTAMGAGGGHPEAFESSTPLHQAED) is bait region. N-linked (GlcNAc...) asparagine glycosylation occurs at Asn857. The segment at residues 970–973 (CGEQ) is a cross-link (isoglutamyl cysteine thioester (Cys-Gln)). Asn1020 carries N-linked (GlcNAc...) asparagine glycosylation.

The protein belongs to the protease inhibitor I39 (alpha-2-macroglobulin) family. Monomer. As to expression, in the epidermis, expressed predominantly in the granular layer at the apical edge of keratinocytes (at protein level). Also detected in placenta, testis and thymus but not in epithelia of kidney, lung, small intestine or colon.

The protein resides in the secreted. Is able to inhibit all four classes of proteinases by a unique 'trapping' mechanism. This protein has a peptide stretch, called the 'bait region' which contains specific cleavage sites for different proteinases. When a proteinase cleaves the bait region, a conformational change is induced in the protein which traps the proteinase. The entrapped enzyme remains active against low molecular weight substrates (activity against high molecular weight substrates is greatly reduced). Following cleavage in the bait region a thioester bond is hydrolyzed and mediates the covalent binding of the protein to the proteinase. Displays inhibitory activity against chymotrypsin, papain, thermolysin, subtilisin A and, to a lesser extent, elastase but not trypsin. May play an important role during desquamation by inhibiting extracellular proteases. This is Alpha-2-macroglobulin-like protein 1 from Homo sapiens (Human).